The following is a 502-amino-acid chain: Glycerol kinase (502 aa).

Thr-16 serves as a coordination point for ADP. Thr-16, Thr-17, and Ser-18 together coordinate ATP. Thr-16 serves as a coordination point for sn-glycerol 3-phosphate. An ADP-binding site is contributed by Arg-20. Residues Arg-86, Glu-87, Tyr-138, and Asp-247 each contribute to the sn-glycerol 3-phosphate site. Glycerol is bound by residues Arg-86, Glu-87, Tyr-138, Asp-247, and Gln-248. Positions 269 and 312 each coordinate ADP. ATP-binding residues include Thr-269, Gly-312, Gln-316, and Gly-413. The ADP site is built by Gly-413 and Asn-417.

This sequence belongs to the FGGY kinase family.

The enzyme catalyses glycerol + ATP = sn-glycerol 3-phosphate + ADP + H(+). It functions in the pathway polyol metabolism; glycerol degradation via glycerol kinase pathway; sn-glycerol 3-phosphate from glycerol: step 1/1. Its activity is regulated as follows. Inhibited by fructose 1,6-bisphosphate (FBP). Key enzyme in the regulation of glycerol uptake and metabolism. Catalyzes the phosphorylation of glycerol to yield sn-glycerol 3-phosphate. The chain is Glycerol kinase from Dechloromonas aromatica (strain RCB).